Here is a 612-residue protein sequence, read N- to C-terminus: MAEQKTSGRRLRQPIVVVLGHVDHGKTTLLDKIRGTTVAAKEPGLITQHVGASFVPASVIEKLAEPLKKIIPFKLIIPGLLFIDTPGHELFANLRRRGGSVADFAILVVDINEGFQPQTYESIEILRQRRVPFVVAANKIDKIPGWRANPDTPFLISLQKQAQRVREELERRLWDNIISKLYELGFQADRFDRIRDFTRTVAVIPISAKTGEGIAELLAVLAGLTQRYLQHRLRFAEGPAKGVILEIREQPGLGTAADVVIYDGVLRKGDIIVTGGLNGPVITHVRALLMPKPLQEIRVAKRELEPVEEVYAAAGVRIVAPGLEEAIAGAPVFVARDEGEAKQLAEKVRREIEALRIKTEAEGVIVKADTLGSLEAMIEALRKRDIPIRYADVGPVAKRDVIEAVASRELNKFYGVILAFNVKVLPEAEEEAKKHGITIFTNNVIYRLLEDFEKWYKEQVEAERRKELEKLVRPGKIRLLPGYVFRRSNPAIVGVEVLGGVIKPGYPLMREDGKRIGTIHQIQDKGKVIHEARAGMAVAISIRGHVMVGRHIDEGDVLYTDIPEQHAVLWLTKFKSELTDDEMVVLKEIIKIKRKQNPAYAVVLGKPQGAKP.

Positions 11 to 229 (LRQPIVVVLG…VLAGLTQRYL (219 aa)) constitute a tr-type G domain. Residues 20-27 (GHVDHGKT) are G1. 20 to 27 (GHVDHGKT) contacts GTP. The G2 stretch occupies residues 45–49 (LITQH). The tract at residues 84–87 (DTPG) is G3. GTP-binding positions include 84-88 (DTPGH) and 138-141 (NKID). The G4 stretch occupies residues 138 to 141 (NKID). The G5 stretch occupies residues 207 to 209 (SAK).

The protein belongs to the TRAFAC class translation factor GTPase superfamily. Classic translation factor GTPase family. IF-2 subfamily.

In terms of biological role, function in general translation initiation by promoting the binding of the formylmethionine-tRNA to ribosomes. Seems to function along with eIF-2. This is Probable translation initiation factor IF-2 from Hyperthermus butylicus (strain DSM 5456 / JCM 9403 / PLM1-5).